Here is a 289-residue protein sequence, read N- to C-terminus: 4-hydroxy-tetrahydrodipicolinate synthase (289 aa).

Thr45 provides a ligand contact to pyruvate. Residue Tyr133 is the Proton donor/acceptor of the active site. Catalysis depends on Lys161, which acts as the Schiff-base intermediate with substrate. Ile200 is a binding site for pyruvate.

It belongs to the DapA family. In terms of assembly, homotetramer; dimer of dimers.

The protein resides in the cytoplasm. The catalysed reaction is L-aspartate 4-semialdehyde + pyruvate = (2S,4S)-4-hydroxy-2,3,4,5-tetrahydrodipicolinate + H2O + H(+). It participates in amino-acid biosynthesis; L-lysine biosynthesis via DAP pathway; (S)-tetrahydrodipicolinate from L-aspartate: step 3/4. In terms of biological role, catalyzes the condensation of (S)-aspartate-beta-semialdehyde [(S)-ASA] and pyruvate to 4-hydroxy-tetrahydrodipicolinate (HTPA). The protein is 4-hydroxy-tetrahydrodipicolinate synthase of Coxiella burnetii (strain Dugway 5J108-111).